Reading from the N-terminus, the 325-residue chain is Phenylalanine--tRNA ligase alpha subunit (325 aa).

Residue Glu251 coordinates Mg(2+).

Belongs to the class-II aminoacyl-tRNA synthetase family. Phe-tRNA synthetase alpha subunit type 1 subfamily. In terms of assembly, tetramer of two alpha and two beta subunits. Mg(2+) serves as cofactor.

The protein localises to the cytoplasm. The catalysed reaction is tRNA(Phe) + L-phenylalanine + ATP = L-phenylalanyl-tRNA(Phe) + AMP + diphosphate + H(+). This is Phenylalanine--tRNA ligase alpha subunit from Thermotoga petrophila (strain ATCC BAA-488 / DSM 13995 / JCM 10881 / RKU-1).